The chain runs to 208 residues: N-(5'-phosphoribosyl)anthranilate isomerase (208 aa).

Belongs to the TrpF family.

It catalyses the reaction N-(5-phospho-beta-D-ribosyl)anthranilate = 1-(2-carboxyphenylamino)-1-deoxy-D-ribulose 5-phosphate. Its pathway is amino-acid biosynthesis; L-tryptophan biosynthesis; L-tryptophan from chorismate: step 3/5. The sequence is that of N-(5'-phosphoribosyl)anthranilate isomerase from Chlamydia trachomatis serovar L2 (strain ATCC VR-902B / DSM 19102 / 434/Bu).